The chain runs to 182 residues: UPF0149 protein CGSHiGG_07585 (182 aa).

The protein belongs to the UPF0149 family.

This chain is UPF0149 protein CGSHiGG_07585, found in Haemophilus influenzae (strain PittGG).